Here is a 135-residue protein sequence, read N- to C-terminus: Protein PsiE homolog (135 aa).

4 helical membrane-spanning segments follow: residues 20–40, 54–74, 82–102, and 107–127; these read VGLI…TFHL, YMLI…ALIV, HFPL…LIIV, and PIDT…LYLA.

Belongs to the PsiE family.

The protein resides in the cell inner membrane. This chain is Protein PsiE homolog, found in Yersinia enterocolitica serotype O:8 / biotype 1B (strain NCTC 13174 / 8081).